The primary structure comprises 292 residues: MALLSPPSPPPPLPPLRRRPASPTLLAVATRPSSLLSLPHCHCGLPLPSTANARAYSRSSRRRRRVAASLGQDEPGVSDTAVAPEGEGDSEPPASSDGAAGDIASSAEQPEASPEDLEDIRQVKRVLELLQKNRDMTFGEVKLTIMIEDPRDIERKRLLGIEDPDEITRDDLADALVEVNEGRIPENRVALQLLAKEMTEWPDLEMEAPKKKSKPGKSVYAKATDTGIDPETAAKRLNIDWDSAADLDDEEEEDDETEVPSAVGYSALYLLTAFPVIIGISVVLILFYNSLQ.

The segment covering 1-15 (MALLSPPSPPPPLPP) has biased composition (pro residues). Residues 1–67 (MALLSPPSPP…RSSRRRRRVA (67 aa)) constitute a chloroplast transit peptide. 2 disordered regions span residues 1–119 (MALL…DLED) and 206–225 (MEAP…KATD). Low complexity-rich tracts occupy residues 49–58 (STANARAYSR) and 94–107 (ASSD…ASSA). A helical membrane pass occupies residues 267–287 (ALYLLTAFPVIIGISVVLILF).

Belongs to the Y3IP1/CEST family.

It is found in the plastid. Its subcellular location is the chloroplast thylakoid membrane. In terms of biological role, involved in light-induced chloroplast development and growth. Involved in the plant response to abiotic and photooxidative stresses. May be involved in the suppression of photooxidative damage. This Oryza sativa subsp. indica (Rice) protein is Protein CHLOROPLAST ENHANCING STRESS TOLERANCE, chloroplastic.